The primary structure comprises 968 residues: Isoleucine--tRNA ligase (968 aa).

The 'HIGH' region signature appears at 68-78; the sequence is PYANGALHMGH. Glu-582 contributes to the L-isoleucyl-5'-AMP binding site. The 'KMSKS' region signature appears at 623-627; the sequence is KMSKS. Lys-626 serves as a coordination point for ATP. Cys-936, Cys-939, Cys-956, and Cys-959 together coordinate Zn(2+).

Belongs to the class-I aminoacyl-tRNA synthetase family. IleS type 1 subfamily. Monomer. It depends on Zn(2+) as a cofactor.

The protein localises to the cytoplasm. The enzyme catalyses tRNA(Ile) + L-isoleucine + ATP = L-isoleucyl-tRNA(Ile) + AMP + diphosphate. Catalyzes the attachment of isoleucine to tRNA(Ile). As IleRS can inadvertently accommodate and process structurally similar amino acids such as valine, to avoid such errors it has two additional distinct tRNA(Ile)-dependent editing activities. One activity is designated as 'pretransfer' editing and involves the hydrolysis of activated Val-AMP. The other activity is designated 'posttransfer' editing and involves deacylation of mischarged Val-tRNA(Ile). This Prochlorococcus marinus (strain MIT 9312) protein is Isoleucine--tRNA ligase.